The following is a 620-amino-acid chain: Long-chain fatty acid transport protein 2 (620 aa).

The Lumenal portion of the chain corresponds to 1 to 4 (MLSA). A helical membrane pass occupies residues 5–27 (IYTVLAGLLFLPLLVNLCCPYFF). Over 28 to 106 (QDIGYFLKVA…DHLGLRQGDC (79 aa)) the chain is Cytoplasmic. The helical transmembrane segment at 107-127 (VALLMGNEPAYVWLWLGLVKL) threads the bilayer. Over 128–261 (GCAMACLNYN…SGLKADDVIY (134 aa)) the chain is Lumenal. 222–233 (YIYTSGTTGLPK) serves as a coordination point for AMP. Residues 262–282 (ITLPFYHSAALLIGIHGCIVA) form a helical membrane-spanning segment. Over 283 to 620 (GATLALRTKF…NAISAKTLKL (338 aa)) the chain is Cytoplasmic. Lysine 291 is modified (N6-acetyllysine). Phosphothreonine is present on threonine 577.

Belongs to the ATP-dependent AMP-binding enzyme family. As to expression, expressed in liver, kidney, placenta, intestine, brain, heart, and colon. Predominantly expressed in liver. Expressed in liver, placenta, and intestine, but much lower relative to isoform 1.

The protein localises to the endoplasmic reticulum membrane. Its subcellular location is the peroxisome membrane. It localises to the cell membrane. It is found in the microsome. The catalysed reaction is a fatty acid(in) = a fatty acid(out). The enzyme catalyses (9Z)-octadecenoate(out) = (9Z)-octadecenoate(in). It carries out the reaction a long-chain fatty acid + ATP + CoA = a long-chain fatty acyl-CoA + AMP + diphosphate. It catalyses the reaction (5Z,8Z,11Z,14Z)-eicosatetraenoate + ATP + CoA = (5Z,8Z,11Z,14Z)-eicosatetraenoyl-CoA + AMP + diphosphate. The catalysed reaction is hexadecanoate + ATP + CoA = hexadecanoyl-CoA + AMP + diphosphate. The enzyme catalyses (9Z)-octadecenoate + ATP + CoA = (9Z)-octadecenoyl-CoA + AMP + diphosphate. It carries out the reaction 3,7,11,15-tetramethylhexadecanoate + ATP + CoA = phytanoyl-CoA + AMP + diphosphate. It catalyses the reaction (9Z,12Z,15Z)-octadecatrienoate + ATP + CoA = (9Z,12Z,15Z)-octadecatrienoyl-CoA + AMP + diphosphate. The catalysed reaction is 2,6,10,14-tetramethylpentadecanoate + ATP + CoA = pristanoyl-CoA + AMP + diphosphate. The enzyme catalyses (E)-hexadec-2-enoate + ATP + CoA = (2E)-hexadecenoyl-CoA + AMP + diphosphate. It carries out the reaction a very long-chain fatty acid + ATP + CoA = a very long-chain fatty acyl-CoA + AMP + diphosphate. It catalyses the reaction tetracosanoate + ATP + CoA = tetracosanoyl-CoA + AMP + diphosphate. The catalysed reaction is (4Z,7Z,10Z,13Z,16Z,19Z)-docosahexaenoate + ATP + CoA = (4Z,7Z,10Z,13Z,16Z,19Z)-docosahexaenoyl-CoA + AMP + diphosphate. The enzyme catalyses (25R)-3alpha,7alpha,12alpha-trihydroxy-5beta-cholestan-26-oate + ATP + CoA = (25R)-3alpha,7alpha,12alpha-trihydroxy-5beta-cholestan-26-oyl-CoA + AMP + diphosphate. Functionally, mediates the import of long-chain fatty acids (LCFA) into the cell by facilitating their transport across cell membranes, playing an important role in hepatic fatty acid uptake. Also functions as an acyl-CoA ligase catalyzing the ATP-dependent formation of fatty acyl-CoA using LCFA and very-long-chain fatty acids (VLCFA) as substrates, which prevents fatty acid efflux from cells and might drive more fatty acid uptake. Plays a pivotal role in regulating available LCFA substrates from exogenous sources in tissues undergoing high levels of beta-oxidation or triglyceride synthesis. Can also activate branched-chain fatty acids such as phytanic acid and pristanic acid. May contribute to the synthesis of sphingosine-1-phosphate. Does not activate C24 bile acids, cholate and chenodeoxycholate. In vitro, activates 3-alpha,7-alpha,12-alpha-trihydroxy-5-beta-cholestanate (THCA), the C27 precursor of cholic acid deriving from the de novo synthesis from cholesterol. However, it is not critical for THCA activation and bile synthesis in vivo. In terms of biological role, exhibits both long-chain fatty acids (LCFA) transport activity and acyl CoA synthetase towards very long-chain fatty acids. Shows a preference for generating CoA derivatives of n-3 fatty acids, which are preferentially trafficked into phosphatidylinositol. Exhibits long-chain fatty acids (LCFA) transport activity but lacks acyl CoA synthetase towards very long-chain fatty acids. This is Long-chain fatty acid transport protein 2 (SLC27A2) from Homo sapiens (Human).